A 261-amino-acid polypeptide reads, in one-letter code: MEHEQKSGAVLLRLLRLLWLLPHSWAVLEASTPVLWDDPQNHTFRHTLFCQDGIPNIGLSETYDEDELFSFDFSQNTRVPRLPDFAEWAQGQGDASAIAFGKSFCEMLMREVSPKLEGQIPVSRGLSVAEVFTLKPLEFGKPNTLVCFISNLFPPTLTVNWQLHSAPVEGASPTSISAVDGLTFQAFSYLNFTPEPFDLYSCTVTHEIDRYTAIAYWVPQNALPSDLLENALCGVAFALGVLGTIIGIVFFLCSQRPCSGD.

An N-terminal signal peptide occupies residues 1–26 (MEHEQKSGAVLLRLLRLLWLLPHSWA). Residues 27-124 (VLEASTPVLW…KLEGQIPVSR (98 aa)) are alpha-1. At 27–231 (VLEASTPVLW…ALPSDLLENA (205 aa)) the chain is on the lumenal side. Asn41 carries N-linked (GlcNAc...) asparagine glycosylation. 2 disulfide bridges follow: Cys50–Cys105 and Cys147–Cys202. An Ig-like C1-type domain is found at 114–215 (PKLEGQIPVS…HEIDRYTAIA (102 aa)). The alpha-2 stretch occupies residues 125–217 (GLSVAEVFTL…IDRYTAIAYW (93 aa)). The tract at residues 218-231 (VPQNALPSDLLENA) is connecting peptide. A helical membrane pass occupies residues 232-252 (LCGVAFALGVLGTIIGIVFFL). Over 253–261 (CSQRPCSGD) the chain is Cytoplasmic.

The protein belongs to the MHC class II family. In terms of assembly, heterodimer of an alpha chain (DMA) and a beta chain (DMB). Interacts with MHCII; this interaction mediates rapid selection of high-affinity peptides.

It is found in the late endosome membrane. Its subcellular location is the lysosome membrane. Functionally, plays a critical role in catalyzing the release of class II-associated invariant chain peptide (CLIP) from newly synthesized MHC class II molecules and freeing the peptide binding site for acquisition of antigenic peptides. The chain is Class II histocompatibility antigen, M alpha chain (H2-DMa) from Mus musculus (Mouse).